Consider the following 514-residue polypeptide: 2,3-bisphosphoglycerate-independent phosphoglycerate mutase (514 aa).

2 residues coordinate Mn(2+): Asp13 and Ser63. Ser63 serves as the catalytic Phosphoserine intermediate. Residues His124, Arg154–Asp155, Arg186, Arg192, Arg258–Arg261, and Lys332 contribute to the substrate site. Mn(2+) contacts are provided by Asp399, His403, Asp440, His441, and His459.

The protein belongs to the BPG-independent phosphoglycerate mutase family. As to quaternary structure, monomer. Requires Mn(2+) as cofactor.

It catalyses the reaction (2R)-2-phosphoglycerate = (2R)-3-phosphoglycerate. It functions in the pathway carbohydrate degradation; glycolysis; pyruvate from D-glyceraldehyde 3-phosphate: step 3/5. Functionally, catalyzes the interconversion of 2-phosphoglycerate and 3-phosphoglycerate. This is 2,3-bisphosphoglycerate-independent phosphoglycerate mutase from Legionella pneumophila (strain Paris).